The primary structure comprises 374 residues: Lactoyl-CoA dehydratase subunit beta (374 aa).

This sequence belongs to the FldB/FldC dehydratase alpha/beta subunit family. As to quaternary structure, heterodimer of an alpha (LcdA) and a beta (LcdB) subunit. The cofactor is [4Fe-4S] cluster. FMN serves as cofactor. Requires riboflavin as cofactor. Mg(2+) is required as a cofactor.

It catalyses the reaction (R)-lactoyl-CoA = acryloyl-CoA + H2O. The enzyme catalyses (2R)-hydroxybutanoyl-CoA = (2E)-butenoyl-CoA + H2O. With respect to regulation, activated by the LcdC protein. Its function is as follows. Involved in the acrylate pathway for the conversion of D-lactic acid to propionic acid. Catalyzes the reversible dehydration of Lactoyl-CoA and 2-hydroxybutyroyl-CoA to acryloyl-CoA and crotonyl-CoA, respectively. This Anaerotignum propionicum (Clostridium propionicum) protein is Lactoyl-CoA dehydratase subunit beta (lcdB).